A 282-amino-acid chain; its full sequence is NADPH-dependent 7-cyano-7-deazaguanine reductase (282 aa).

Position 88–90 (88–90 (IES)) interacts with substrate. 90–91 (SK) serves as a coordination point for NADPH. Residue cysteine 190 is the Thioimide intermediate of the active site. The Proton donor role is filled by aspartate 197. A substrate-binding site is contributed by 229-230 (HE). Position 258–259 (258–259 (RG)) interacts with NADPH.

This sequence belongs to the GTP cyclohydrolase I family. QueF type 2 subfamily. Homodimer.

The protein resides in the cytoplasm. It carries out the reaction 7-aminomethyl-7-carbaguanine + 2 NADP(+) = 7-cyano-7-deazaguanine + 2 NADPH + 3 H(+). It functions in the pathway tRNA modification; tRNA-queuosine biosynthesis. Functionally, catalyzes the NADPH-dependent reduction of 7-cyano-7-deazaguanine (preQ0) to 7-aminomethyl-7-deazaguanine (preQ1). In Escherichia coli O127:H6 (strain E2348/69 / EPEC), this protein is NADPH-dependent 7-cyano-7-deazaguanine reductase.